The primary structure comprises 169 residues: Ureidoglycolate lyase (169 aa).

The protein belongs to the ureidoglycolate lyase family. In terms of assembly, homodimer. The cofactor is Ni(2+).

It carries out the reaction (S)-ureidoglycolate = urea + glyoxylate. The protein operates within nitrogen metabolism; (S)-allantoin degradation. Its function is as follows. Catalyzes the catabolism of the allantoin degradation intermediate (S)-ureidoglycolate, generating urea and glyoxylate. Involved in the utilization of allantoin as nitrogen source. This chain is Ureidoglycolate lyase, found in Pseudomonas paraeruginosa (strain DSM 24068 / PA7) (Pseudomonas aeruginosa (strain PA7)).